The following is a 134-amino-acid chain: Putative nickel-responsive regulator (134 aa).

Ni(2+) contacts are provided by H78, H89, H91, and C97.

This sequence belongs to the transcriptional regulatory CopG/NikR family. Requires Ni(2+) as cofactor.

Transcriptional regulator. This Chlorobium limicola (strain DSM 245 / NBRC 103803 / 6330) protein is Putative nickel-responsive regulator.